Reading from the N-terminus, the 415-residue chain is MDYRVKDLSLAEQGRKQIEWAELHMPALMEIRKRFNAEKPLDGIRIGAVLHVTKETAVLVETLKAGGAEIALAGSNPLSTQDDVAAGLAKNGIHVYAWRGETEKDYYDNIREILKYEPHVIMDDGGDLHAYVHENNLTSKIVGGTEETTTGVIRLKAMEEEKVLKYPVIAVNNAFTKYLFDNRIGTGQSTIDGILRATNILIAGKVAVVIGYGWVGRGIASRFKGMGARVIVVESSPFRALEALMDGFDVMTMNRASEIGDIFVTATGNLNVVSRDHILRMKDGAVLANSGHFNVEIDVKGLKEISVETREVRQNLEEYKLRNGKRIYLLADGRLVNLVAAEGHPSEVMDLSFCNQALSVEHLIKNKGKLENKVYNVPIEIDEQVARLKLKALGIEIEELTIEQKEYIKQWKYGT.

3 residues coordinate substrate: threonine 53, aspartate 124, and glutamate 147. NAD(+) is bound at residue 148 to 150; that stretch reads TTT. Residues lysine 177 and aspartate 181 each contribute to the substrate site. NAD(+) contacts are provided by residues asparagine 182, 211 to 216, glutamate 234, asparagine 269, 290 to 292, and asparagine 337; these read GYGWVG and SGH.

Belongs to the adenosylhomocysteinase family. NAD(+) is required as a cofactor.

The protein resides in the cytoplasm. It catalyses the reaction S-adenosyl-L-homocysteine + H2O = L-homocysteine + adenosine. It functions in the pathway amino-acid biosynthesis; L-homocysteine biosynthesis; L-homocysteine from S-adenosyl-L-homocysteine: step 1/1. Functionally, may play a key role in the regulation of the intracellular concentration of adenosylhomocysteine. The protein is Adenosylhomocysteinase of Sulfolobus acidocaldarius (strain ATCC 33909 / DSM 639 / JCM 8929 / NBRC 15157 / NCIMB 11770).